Here is a 245-residue protein sequence, read N- to C-terminus: AP-1-like transcription factor YAP7 (245 aa).

Residues 1-144 (MRQRRSVVAV…NRDAQRAYRE (144 aa)) form a disordered region. The span at 74 to 94 (SANNDGSSKIKKVQTSNQKDQ) shows a compositional bias: polar residues. 2 stretches are compositionally biased toward basic and acidic residues: residues 95–114 (MTTK…KSDD) and 135–144 (NRDAQRAYRE). The bZIP domain occupies 125–188 (VDSVEKRRRQ…SDTKENLQKS (64 aa)). The segment at 130-149 (KRRRQNRDAQRAYRERRTTR) is basic motif. The tract at residues 153–181 (LEEKVEMLHNLVDDWQRKYKLLESEFSDT) is leucine-zipper.

It belongs to the bZIP family. YAP subfamily. In terms of assembly, homodimer.

The protein resides in the nucleus. Probable transcription activator linked to cell cycle that induces transcription activation of genes in the environmental stress response and metabolism control pathways, like the closely related YAP5. This is AP-1-like transcription factor YAP7 (YAP7) from Saccharomyces cerevisiae (strain ATCC 204508 / S288c) (Baker's yeast).